Here is a 466-residue protein sequence, read N- to C-terminus: 3-isopropylmalate dehydratase large subunit (466 aa).

Residues Cys347, Cys407, and Cys410 each contribute to the [4Fe-4S] cluster site.

It belongs to the aconitase/IPM isomerase family. LeuC type 1 subfamily. Heterodimer of LeuC and LeuD. It depends on [4Fe-4S] cluster as a cofactor.

It carries out the reaction (2R,3S)-3-isopropylmalate = (2S)-2-isopropylmalate. Its pathway is amino-acid biosynthesis; L-leucine biosynthesis; L-leucine from 3-methyl-2-oxobutanoate: step 2/4. In terms of biological role, catalyzes the isomerization between 2-isopropylmalate and 3-isopropylmalate, via the formation of 2-isopropylmaleate. This is 3-isopropylmalate dehydratase large subunit from Shigella dysenteriae serotype 1 (strain Sd197).